The following is a 126-amino-acid chain: Prostate and testis expressed protein 1 (126 aa).

Positions 1–21 (MDKSLLLELPILLCCFRALSG) are cleaved as a signal peptide. The 80-residue stretch at 46–125 (VQCRMCHLQF…CRSHDLCNED (80 aa)) folds into the UPAR/Ly6 domain. Disulfide bonds link Cys48–Cys75, Cys51–Cys60, Cys67–Cys94, and Cys98–Cys115.

It belongs to the PATE family. In terms of tissue distribution, expressed specifically in prostate cancer, normal prostate, and testis. Expressed in the epithelial cells of the prostate cancer and normal prostate tissues.

The protein localises to the secreted. The chain is Prostate and testis expressed protein 1 (PATE1) from Homo sapiens (Human).